Here is a 486-residue protein sequence, read N- to C-terminus: Corytuberine synthase (486 aa).

Residues 6 to 21 traverse the membrane as a helical segment; sequence ALFSLIPVILVFILLL. Residue Cys428 participates in heme binding.

Belongs to the cytochrome P450 family. Heme serves as cofactor.

It localises to the endoplasmic reticulum membrane. It carries out the reaction (S)-reticuline + reduced [NADPH--hemoprotein reductase] + O2 = (S)-corytuberine + oxidized [NADPH--hemoprotein reductase] + 2 H2O + 2 H(+). Its activity is regulated as follows. Inhibited by ketoconazole. Cytochrome P450 that catalyzes an intramolecular C-C phenol coupling of (S)-reticuline in magnoflorine biosynthesis. Catalyzes the formation of (S)-corytuberine from (S)-reticuline, and also, with a lover efficiency, the 4'-O-demethylation of codamine to produce orientaline, and subsequent C-C-phenol coupling of orientaline. Can also use (R,S)-norreticuline, (R,S)-orientaline, (S)-N-methylcoclaurine and (S)-coclaurine as substrates, but not (R,S)-6-O-methyllaudanosoline, (R,S)-6-O-methylnorlaudanosoline, (R,S)-laudanine, (R,S)-norlaudanine, (R,S)-4'-O-methyllaudanosoline, (R,S)-pseudocodamine, (R,S)-norpseudocodamine, (R,S)-laudanosine, (R,S)-norlaudanosine, (R,S)-laudanosoline or (R,S)-norlaudanosoline. In Coptis japonica (Japanese goldthread), this protein is Corytuberine synthase.